Reading from the N-terminus, the 476-residue chain is Cysteine--tRNA ligase (476 aa).

Cys-29 contributes to the Zn(2+) binding site. Residues 31 to 41 carry the 'HIGH' region motif; sequence PTVYDYPHLGH. Positions 209, 234, and 238 each coordinate Zn(2+). Positions 266 to 270 match the 'KMSKS' region motif; sequence KMSKS. Residue Lys-269 coordinates ATP.

This sequence belongs to the class-I aminoacyl-tRNA synthetase family. Requires Zn(2+) as cofactor.

The protein resides in the cytoplasm. The catalysed reaction is tRNA(Cys) + L-cysteine + ATP = L-cysteinyl-tRNA(Cys) + AMP + diphosphate. This is Cysteine--tRNA ligase (cysS) from Pyrococcus horikoshii (strain ATCC 700860 / DSM 12428 / JCM 9974 / NBRC 100139 / OT-3).